The primary structure comprises 474 residues: tRNA-2-methylthio-N(6)-dimethylallyladenosine synthase (474 aa).

Residues 3–120 (KKLHIKTWGC…LPEMINSVRG (118 aa)) form the MTTase N-terminal domain. Positions 12, 49, 83, 157, 161, and 164 each coordinate [4Fe-4S] cluster. The Radical SAM core domain occupies 143–375 (RAEGPTAFVS…QERINQQAMA (233 aa)). The 64-residue stretch at 378–441 (RRMLGTTQRI…PNSLRGKVVR (64 aa)) folds into the TRAM domain.

The protein belongs to the methylthiotransferase family. MiaB subfamily. Monomer. Requires [4Fe-4S] cluster as cofactor.

The protein localises to the cytoplasm. The catalysed reaction is N(6)-dimethylallyladenosine(37) in tRNA + (sulfur carrier)-SH + AH2 + 2 S-adenosyl-L-methionine = 2-methylsulfanyl-N(6)-dimethylallyladenosine(37) in tRNA + (sulfur carrier)-H + 5'-deoxyadenosine + L-methionine + A + S-adenosyl-L-homocysteine + 2 H(+). Its function is as follows. Catalyzes the methylthiolation of N6-(dimethylallyl)adenosine (i(6)A), leading to the formation of 2-methylthio-N6-(dimethylallyl)adenosine (ms(2)i(6)A) at position 37 in tRNAs that read codons beginning with uridine. This is tRNA-2-methylthio-N(6)-dimethylallyladenosine synthase from Salmonella enteritidis PT4 (strain P125109).